Reading from the N-terminus, the 217-residue chain is RING-H2 finger protein ATL40 (217 aa).

The chain crosses the membrane as a helical span at residues 28–48; it reads IFLVTTVSFSIIIIIVFVYYL. The RING-type; atypical zinc-finger motif lies at 100 to 142; the sequence is CAVCLSLLEEKDNARMLPNCKHVFHVSCVDTWLTTQSTCPVCR. Basic and acidic residues-rich tracts occupy residues 143-160 and 186-217; these read TEAEPSHPRLEPEPREGP and DSFRRILTRERSSNRRDHSRVDQDRELDIERQ. The segment at 143 to 217 is disordered; that stretch reads TEAEPSHPRL…QDRELDIERQ (75 aa).

It belongs to the RING-type zinc finger family. ATL subfamily.

The protein localises to the membrane. The enzyme catalyses S-ubiquitinyl-[E2 ubiquitin-conjugating enzyme]-L-cysteine + [acceptor protein]-L-lysine = [E2 ubiquitin-conjugating enzyme]-L-cysteine + N(6)-ubiquitinyl-[acceptor protein]-L-lysine.. It participates in protein modification; protein ubiquitination. In Arabidopsis thaliana (Mouse-ear cress), this protein is RING-H2 finger protein ATL40 (ATL40).